The sequence spans 217 residues: Protein dao-4 (217 aa).

An N-terminal signal peptide occupies residues 1-21 (MKIALYSILLITVCYLSSTDA).

It localises to the nucleus. It is found in the secreted. Probably acts downstream of the Wnt signaling pathway. This chain is Protein dao-4, found in Caenorhabditis elegans.